A 356-amino-acid polypeptide reads, in one-letter code: Guanine nucleotide-binding protein alpha-17 subunit (356 aa).

A lipid anchor (N-myristoyl glycine) is attached at glycine 2. Cysteine 4 carries S-palmitoyl cysteine lipidation. Residues 32–356 (SIVKLLLLGA…QKNLQKAGMM (325 aa)) form the G-alpha domain. A G1 motif region spans residues 35–48 (KLLLLGAGECGKST). Residues 40–47 (GAGECGKS), 177–183 (LYSRVAT), 202–206 (DVGGQ), 271–274 (NKKD), and alanine 328 each bind GTP. Mg(2+)-binding residues include serine 47 and threonine 183. Positions 175–183 (DILYSRVAT) are G2 motif. The G3 motif stretch occupies residues 198 to 207 (FRVFDVGGQR). The tract at residues 267-274 (ILFMNKKD) is G4 motif. Residues 326 to 331 (TCATDT) form a G5 motif region.

It belongs to the G-alpha family. As to quaternary structure, g proteins are composed of 3 units; alpha, beta and gamma. The alpha chain contains the guanine nucleotide binding site. As to expression, expressed in sensory neurons in the head and tail. Expressed in amphid AWC neurons, to a lesser extent in AWB and weakly in AWA, ASH and ADF neurons (head sensory neurons). Expressed in phasmid PHA and PHB neurons (tail sensory neurons).

The protein resides in the cell projection. It localises to the cilium. Its subcellular location is the dendrite. In terms of biological role, guanine nucleotide-binding proteins (G proteins) are involved as modulators or transducers in various transmembrane signaling systems. This specific G-alpha subunit plays an important role in olfaction and in cilia morphogenesis. Involved in chemotactic responses to attractants diacetyl, pyrazine, 2,4,5-trimethylthiazole, benzaldehyde, isoamyl alcohol, butanone and 2,3-pentanedione. Displays a redundant function with gpa-3 in chemotactic responses. Plays a role in the avoidance response to the noxious chemical quinine in ASH sensory neurons. Involved in avoidance responses to copper, sodium dodecyl sulfate and linoleic acid. Involved in osmotic avoidance and mechanosensory responses. Involved in specifying fan-like morphology of cilia of head sensory neurons AWC. Plays a role in the detection of preferred food sources by mediating the recognition of food odors in olfactory sensory neurons. The protein is Guanine nucleotide-binding protein alpha-17 subunit of Caenorhabditis elegans.